A 166-amino-acid polypeptide reads, in one-letter code: Putative 4-hydroxy-4-methyl-2-oxoglutarate aldolase 1 (166 aa).

The residue at position 2 (A2) is an N-acetylalanine. Substrate is bound by residues 81–84 (GGNP) and R103. D104 contacts a divalent metal cation.

The protein belongs to the class II aldolase/RraA-like family. As to quaternary structure, homotrimer. It depends on a divalent metal cation as a cofactor.

The catalysed reaction is 4-hydroxy-4-methyl-2-oxoglutarate = 2 pyruvate. It carries out the reaction oxaloacetate + H(+) = pyruvate + CO2. Its function is as follows. Catalyzes the aldol cleavage of 4-hydroxy-4-methyl-2-oxoglutarate (HMG) into 2 molecules of pyruvate. Also contains a secondary oxaloacetate (OAA) decarboxylase activity due to the common pyruvate enolate transition state formed following C-C bond cleavage in the retro-aldol and decarboxylation reactions. This is Putative 4-hydroxy-4-methyl-2-oxoglutarate aldolase 1 from Arabidopsis thaliana (Mouse-ear cress).